We begin with the raw amino-acid sequence, 400 residues long: WD repeat and FYVE domain-containing protein 2 (400 aa).

6 WD repeats span residues 22–61, 66–105, 112–150, 153–192, 197–236, and 240–279; these read GSQE…QYWP, AMPS…NKMT, AHQS…QRLG, RTSA…CTLL, GHTG…GTAI, and GHND…QETP. The segment at 281-352 adopts an FYVE-type zinc-finger fold; sequence WLDSDSCQKC…VCDSCHEAIT (72 aa). Residues C287, C290, C314, C317, C322, C325, C344, and C347 each contribute to the Zn(2+) site. The WD 7 repeat unit spans residues 364–399; that stretch reads DSKHNIVHVHFDATRGWLLTSGTDKVIKLWDMTPVV.

As to quaternary structure, homodimer. Interacts (via WD repeats 1-3) with AKT1, AKT2, PRKCZ and PRKCI. Interacts with VAMP2. Forms a complex with VAMP2 and PRKCZ. Interacts with FOXO1. Forms a complex with AKT1 and FOXO1. In terms of tissue distribution, highly expressed in the brain (at protein level).

The protein localises to the endosome. The protein resides in the early endosome. Its subcellular location is the cytoplasm. Functionally, acts in an adapter protein-like fashion to mediate the interaction between the kinase PRKCZ and its substrate VAMP2 and increases the PRKCZ-dependent phosphorylation of VAMP2. Positively regulates adipocyte differentiation, by facilitating the phosphorylation and thus inactivation of the anti-adipogenetic transcription factor FOXO1 by the kinase AKT1. Plays a role in endosomal control of AKT2 signaling; required for insulin-stimulated AKT2 phosphorylation and glucose uptake and insulin-stimulated phosphorylation of AKT2 substrates. Participates in transferrin receptor endocytosis. The chain is WD repeat and FYVE domain-containing protein 2 (Wdfy2) from Mus musculus (Mouse).